The chain runs to 351 residues: dTDP-glucose 4,6-dehydratase (351 aa).

NAD(+) is bound by residues 12-13 (FI), 32-35 (DALT), 58-59 (DI), 80-84 (FAAES), and T99. S84 contributes to the substrate binding site. T133 contributes to the substrate binding site. D134 serves as the catalytic Proton donor. Residues E135 and Y158 each act as proton acceptor in the active site. Residue 158-162 (YSASK) coordinates NAD(+). Substrate is bound at residue N187. Residue N188 participates in NAD(+) binding. Residues 197-198 (KL), 213-215 (PVY), R222, N257, and 289-293 (DRPGH) contribute to the substrate site.

This sequence belongs to the NAD(P)-dependent epimerase/dehydratase family. dTDP-glucose dehydratase subfamily. In terms of assembly, homodimer. It depends on NAD(+) as a cofactor.

The catalysed reaction is dTDP-alpha-D-glucose = dTDP-4-dehydro-6-deoxy-alpha-D-glucose + H2O. It functions in the pathway carbohydrate biosynthesis; dTDP-L-rhamnose biosynthesis. Its pathway is bacterial outer membrane biogenesis; LPS O-antigen biosynthesis. Functionally, catalyzes the dehydration of dTDP-D-glucose to form dTDP-6-deoxy-D-xylo-4-hexulose via a three-step process involving oxidation, dehydration and reduction. The polypeptide is dTDP-glucose 4,6-dehydratase (rfbB) (Xanthomonas campestris pv. campestris (strain B100)).